A 723-amino-acid chain; its full sequence is Catalase-peroxidase (723 aa).

Positions 97–225 (WHAAGSYRVT…LAAVQMGLIY (129 aa)) form a cross-link, tryptophyl-tyrosyl-methioninium (Trp-Tyr) (with M-251). The active-site Proton acceptor is the H98. Positions 225–251 (YVNPEGVNGKSDPLATAAQMRETFARM) form a cross-link, tryptophyl-tyrosyl-methioninium (Tyr-Met) (with W-97). Residue H266 participates in heme b binding.

It belongs to the peroxidase family. Peroxidase/catalase subfamily. Homodimer or homotetramer. Heme b is required as a cofactor. Post-translationally, formation of the three residue Trp-Tyr-Met cross-link is important for the catalase, but not the peroxidase activity of the enzyme.

It carries out the reaction H2O2 + AH2 = A + 2 H2O. It catalyses the reaction 2 H2O2 = O2 + 2 H2O. Its function is as follows. Bifunctional enzyme with both catalase and broad-spectrum peroxidase activity. This is Catalase-peroxidase from Agrobacterium fabrum (strain C58 / ATCC 33970) (Agrobacterium tumefaciens (strain C58)).